A 252-amino-acid polypeptide reads, in one-letter code: Ribosomal RNA small subunit methyltransferase J (252 aa).

S-adenosyl-L-methionine contacts are provided by residues R101–D102, E117–R118, S153–S154, and D171.

This sequence belongs to the methyltransferase superfamily. RsmJ family.

It is found in the cytoplasm. The enzyme catalyses guanosine(1516) in 16S rRNA + S-adenosyl-L-methionine = N(2)-methylguanosine(1516) in 16S rRNA + S-adenosyl-L-homocysteine + H(+). Its function is as follows. Specifically methylates the guanosine in position 1516 of 16S rRNA. In Pseudoalteromonas translucida (strain TAC 125), this protein is Ribosomal RNA small subunit methyltransferase J.